The primary structure comprises 466 residues: MAKTLYEKVWDSHVVVENEGQAPLIYVDRHLVHEVTSPQAFSGLKVAGRKLRAPEKTFATMDHNTSTKSASLDALSPMARIQVETLQDNCKEFGVRLYDIHHKNQGIVHVMGPELGITLPGTVIVCGDSHTATHGAFGALAFGIGTSEVEHVMATQTLRQNKAKTMKIEVRGHVAAGITAKDIVLAIIGKIGMDGGTGYVVEFCGEAIEALSMEGRMTVCNMAIEMGAKAGMVAPDGITAEYLKGREFAPKGESWEQAIAAWAELKTDEDAIFDASVVLEASDIAPQLTWGTNPGQVVAIDGLVPNPEDESNATVKASIEKALEYVALSAGTCMTDVSINKVFIGSCTNSRIEDLRDAALHAKGRKVAAGVTAIVVPGSGLVKEQAEAEGLDKIFLEAGFEWRLPGCSMCLAMNDDRLEAGDRCASTSNRNFEGRQGRGSRTHLVSPAMAAAAAVAGHFVDIRKAY.

Residues Cys-347, Cys-407, and Cys-410 each coordinate [4Fe-4S] cluster.

The protein belongs to the aconitase/IPM isomerase family. LeuC type 1 subfamily. Heterodimer of LeuC and LeuD. The cofactor is [4Fe-4S] cluster.

It carries out the reaction (2R,3S)-3-isopropylmalate = (2S)-2-isopropylmalate. Its pathway is amino-acid biosynthesis; L-leucine biosynthesis; L-leucine from 3-methyl-2-oxobutanoate: step 2/4. In terms of biological role, catalyzes the isomerization between 2-isopropylmalate and 3-isopropylmalate, via the formation of 2-isopropylmaleate. The protein is 3-isopropylmalate dehydratase large subunit of Shewanella sediminis (strain HAW-EB3).